The following is a 60-amino-acid chain: Anionic antimicrobial peptide 2 (60 aa).

In terms of tissue distribution, hemolymph.

The protein resides in the secreted. Its function is as follows. Antimicrobial protein. Has antibacterial activity against the Gram-positive bacteria M.luteus (MIC=86.6 uM), L.monocytogenes (MIC=86.6 uM), and S.lutea (MIC=86.6 uM). Lacks antibacterial activity against the Gram-positive bacteria B.circulans and S.aureus, and the Gram-negative bacteria E.coli D31, E.coli ATCC 25922, and S.typhimurium. Has antifungal activity against P.pastoris (MIC=86.6 uM) and P.stipitis (MIC=90.9 uM), but lacks antifungal activity against A.niger, C.albicans, C.albidus, C.fructus, C.wickerhamii, F.oxysporum, S.cerevisiae, S.pombe, T.harzianum, and Z.marxianus. This is Anionic antimicrobial peptide 2 from Galleria mellonella (Greater wax moth).